A 786-amino-acid chain; its full sequence is Myosin light chain kinase 3 (786 aa).

Ser155 is modified (phosphoserine). 3 disordered regions span residues 233-258, 279-315, and 333-443; these read EALD…SEDT, RMSQ…IHSD, and ELFE…GRRV. Residues 279–293 are compositionally biased toward polar residues; the sequence is RMSQSAGEGTSSSKP. Phosphoserine is present on residues Ser341 and Ser422. The region spanning 482 to 737 is the Protein kinase domain; it reads VSQHEVLGGG…ATQCLKHEWL (256 aa). Residues 488-496 and Lys511 contribute to the ATP site; that span reads LGGGRFGQV. Asp603 acts as the Proton acceptor in catalysis.

This sequence belongs to the protein kinase superfamily. CAMK Ser/Thr protein kinase family. The cofactor is Mg(2+). In terms of processing, phosphorylated on serine residues. As to expression, expressed in cardiomyocytes (at protein level). Up-regulated in heart after experimental myocardial infarction at the mRNA level.

It is found in the cytoplasm. The enzyme catalyses L-seryl-[myosin light chain] + ATP = O-phospho-L-seryl-[myosin light chain] + ADP + H(+). It catalyses the reaction L-threonyl-[myosin light chain] + ATP = O-phospho-L-threonyl-[myosin light chain] + ADP + H(+). Functionally, calmodulin-dependent kinase that phosphorylates MYL2 in vitro. Promotes sarcomere formation in cardiomyocytes. Increases cardiomyocyte contractility. This Rattus norvegicus (Rat) protein is Myosin light chain kinase 3 (Mylk3).